We begin with the raw amino-acid sequence, 283 residues long: N-terminal Xaa-Pro-Lys N-methyltransferase 2 (283 aa).

Residues Gly-124, Arg-129, Asp-146, 174 to 175, Gln-190, and His-195 each bind S-adenosyl-L-methionine; that span reads LQ.

The protein belongs to the methyltransferase superfamily. NTM1 family.

The protein resides in the nucleus. It catalyses the reaction N-terminal L-alanyl-L-prolyl-L-lysyl-[protein] + S-adenosyl-L-methionine = N-terminal N-methyl-L-alanyl-L-prolyl-L-lysyl-[protein] + S-adenosyl-L-homocysteine + H(+). It carries out the reaction N-terminal L-prolyl-L-prolyl-L-lysyl-[protein] + S-adenosyl-L-methionine = N-terminal N-methyl-L-prolyl-L-prolyl-L-lysyl-[protein] + S-adenosyl-L-homocysteine + H(+). The catalysed reaction is N-terminal L-seryl-L-prolyl-L-lysyl-[protein] + S-adenosyl-L-methionine = N-terminal N-methyl-L-seryl-L-prolyl-L-lysyl-[protein] + S-adenosyl-L-homocysteine + H(+). In terms of biological role, alpha N-methyltransferase that methylates the N-terminus of target proteins containing the N-terminal motif [Ala/Pro/Ser]-Pro-Lys when the initiator Met is cleaved. Specifically catalyzes monomethylation of exposed alpha-amino group of Ala or Ser residue in the [Ala/Ser]-Pro-Lys motif and Pro in the Pro-Pro-Lys motif. Predominantly functions as a mono-methyltransferase but is also able to di-/tri-methylate the GPKRIA peptide and di-methylate the PPKRIA peptide (in vitro). May activate NTMT1 by priming its substrates for trimethylation. This chain is N-terminal Xaa-Pro-Lys N-methyltransferase 2, found in Homo sapiens (Human).